The chain runs to 713 residues: Leucine-rich repeat-containing protein 4B (713 aa).

A signal peptide spans 1-35; sequence MARARGSPCPPLPPGRMSWPHGALLFLWLFSPPLG. Residues 36 to 576 are Extracellular-facing; the sequence is AGGGGVAVTS…DLDDVMKTTK (541 aa). An LRRNT domain is found at 48–86; that stretch reads GGGSPPATSCPVACSCSNQASRVICTRRDLAEVPASIPV. 9 LRR repeats span residues 87–108, 111–132, 135–156, 159–180, 183–205, 208–229, 230–251, 254–275, and 278–299; these read NTRY…TFKH, HLEI…AFNG, SLNT…AFEY, KLRE…AFNR, SLRR…AFEG, NLRY…TALV, RLEE…SFQG, SLRK…AFDD, and SLEE…LFTP. N-linked (GlcNAc...) asparagine glycosylation is present at Asn-224. Residues Asn-283, Asn-333, Asn-374, Asn-400, Asn-422, Asn-425, Asn-444, and Asn-452 are each glycosylated (N-linked (GlcNAc...) asparagine). An LRRCT domain is found at 311–363; it reads NPWHCNCDVLWLSWWLKETVPSNTTCCARCHAPAGLKGRYIGELDQSHFTCYA. The region spanning 364 to 452 is the Ig-like C2-type domain; it reads PVIVEPPTDL…GNTTASATLN (89 aa). The cysteines at positions 385 and 436 are disulfide-linked. The tract at residues 497–551 is disordered; it reads TQPGEEALQPRGTEKEPPGPTTDGVWGGGRPGDAAGPASSSTTAPAPRSSRPTEK. The segment covering 528 to 546 has biased composition (low complexity); that stretch reads GDAAGPASSSTTAPAPRSS. The chain crosses the membrane as a helical span at residues 577 to 597; the sequence is IIIGCFVAITFMAAVMLVAFY. Residues 598 to 713 lie on the Cytoplasmic side of the membrane; that stretch reads KLRKQHQLHK…SKENVQETQI (116 aa). Ser-693 carries the post-translational modification Phosphoserine. The interval 694 to 713 is disordered; that stretch reads IHEPLLFKSGSKENVQETQI. Residues 703–713 are compositionally biased toward basic and acidic residues; the sequence is GSKENVQETQI.

Interacts with PTPRF. Interacts with DLG4. Post-translationally, N-glycosylated. O-glycosylated; contains sialic acid.

Its subcellular location is the membrane. The protein resides in the presynaptic cell membrane. Synaptic adhesion protein. Regulates the formation of excitatory synapses. The trans-synaptic adhesion between LRRC4B and PTPRF regulates the formation of excitatory synapses in a bidirectional manner. This is Leucine-rich repeat-containing protein 4B (LRRC4B) from Homo sapiens (Human).